Reading from the N-terminus, the 264-residue chain is Meiotically up-regulated gene 162 protein (264 aa).

Transmembrane regions (helical) follow at residues 18 to 38 (IVIF…WNLK), 54 to 74 (LWIY…AGSA), 84 to 104 (VFQV…GYSF), 140 to 160 (IISI…LLFL), 174 to 194 (HLSY…IKLI), 199 to 219 (FVLG…SLIT), and 223 to 243 (LISY…IWIY).

The protein resides in the endoplasmic reticulum membrane. In terms of biological role, has a role in meiosis. The protein is Meiotically up-regulated gene 162 protein (mug162) of Schizosaccharomyces pombe (strain 972 / ATCC 24843) (Fission yeast).